The following is a 353-amino-acid chain: Chemerin-like receptor 2 (353 aa).

Residues 1-41 (MEVSKEMLFEELDNYSYALDYYSQESDPEEKVYLGLVHWIS) lie on the Extracellular side of the membrane. An N-linked (GlcNAc...) asparagine glycan is attached at Asn-14. A helical membrane pass occupies residues 42-62 (LFLYALAFVLGIPGNAIVIWL). Topologically, residues 63–73 (MGFKWKKTVTT) are cytoplasmic. The chain crosses the membrane as a helical span at residues 74–94 (LWFLNLAIADFIFVLFLPLYI). Residues 95-112 (SYVALSFHWPFGLWLCKV) lie on the Extracellular side of the membrane. Cysteines 110 and 187 form a disulfide. Residues 113 to 133 (NSFIAQLNMFSSVFFLTVISL) form a helical membrane-spanning segment. Residues 134–154 (DRYIHLLHPGLSHRHRTLKSS) are Cytoplasmic-facing. Residues 155-175 (LVVVILVWLLASLLGGPTLYF) traverse the membrane as a helical segment. The Extracellular portion of the chain corresponds to 176–210 (RDTMEVNNHIICYNNFQEHELTLMRHHVLTWVKFL). Residues 211–231 (FGYLFPLLTMSSCYLCLIFKM) form a helical membrane-spanning segment. The Cytoplasmic segment spans residues 232-247 (KKRNILISRKHLWMIL). Residues 248–268 (SVVIAFLVCWTPYHLFSIWEL) form a helical membrane-spanning segment. Over 269 to 286 (SIHHNSSFQNVLQGGIPL) the chain is Extracellular. A helical transmembrane segment spans residues 287–307 (STGLAFLNSCLNPILYVLISK). The Cytoplasmic portion of the chain corresponds to 308–353 (TFQARFRASVAEVLKRSLWEASCSGTVSEQLRSAETKSLSLLETAQ).

This sequence belongs to the chemokine-like receptor (CMKLR) family. In terms of tissue distribution, high expressed in white adipose tissue and skeletal muscle. Expressed in hippocampus and cortex.

It localises to the cell membrane. Receptor for chemoattractant adipokine chemerin/RARRES2 suggesting a role for this receptor in the regulation of inflammation and energy homesotasis. Signals mainly via beta-arrestin pathway. Binding of RARRES2 activates weakly G proteins, calcium mobilization and MAPK1/MAPK3 (ERK1/2) phosphorylation too. Acts also as a receptor for TAFA1, mediates its effects on neuronal stem-cell proliferation and differentiation via the activation of ROCK/ERK and ROCK/STAT3 signaling pathway. This is Chemerin-like receptor 2 (Cmklr2) from Mus musculus (Mouse).